Reading from the N-terminus, the 417-residue chain is Sulfate adenylyltransferase (417 aa).

The protein belongs to the sulfate adenylyltransferase family.

The catalysed reaction is sulfate + ATP + H(+) = adenosine 5'-phosphosulfate + diphosphate. It functions in the pathway sulfur metabolism; hydrogen sulfide biosynthesis; sulfite from sulfate: step 1/3. The polypeptide is Sulfate adenylyltransferase (Psychrobacter cryohalolentis (strain ATCC BAA-1226 / DSM 17306 / VKM B-2378 / K5)).